The primary structure comprises 966 residues: SH3 domain-binding protein 4 (966 aa).

The SH3 1 domain occupies 57 to 116 (GAAREVVAIKDCCPSSFTTLKFSKGDRLYVLDSSGAEWWYAHNNTEMGYIPAAYVEPINY). The region spanning 322 to 457 (TNIVCRLDSS…LEPCMYVCVV (136 aa)) is the ZU5 domain. Residues 657-727 (NNLKFGKLIK…HAKNVLVVGK (71 aa)) enclose the SH3 2 domain.

In terms of assembly, homodimer or homooligomer.

The protein localises to the membrane. The protein resides in the clathrin-coated pit. It is found in the cytoplasmic vesicle. It localises to the clathrin-coated vesicle. Its subcellular location is the nucleus. Possible role in regulating endocytosis of the transferrin receptor at the plasma membrane. Alternatively, may function as a negative regulator of the amino acid-induced TOR signaling by inhibiting the formation of active Rag GTPase complexes. Preferentially binds inactive Rag GTPase complexes and prevents their interaction with the mTORC1 complex inhibiting its relocalization to lysosomes and its activation. Thereby, may indirectly regulate cell growth, proliferation and autophagy. This is SH3 domain-binding protein 4 (sh3bp4) from Seriola quinqueradiata (Five-ray yellowtail).